The chain runs to 448 residues: MNQAQNSVGKSLDVQSFINQQPLSRYQWRVVLLCFLIVFLDGLDTAAMGFIAPALSQEWGIDRASLGPVMSAALIGMVFGALGSGPLADRFGRKGVLVGAVLVFGGFSLASAYATNVDQLLVLRFLTGLGLGAGMPNATTLLSEYTPERLKSLLVTSMFCGFNLGMAGGGFISAKMIPAYGWHSLLVIGGVLPLLLALVLMVWLPESARFLVVRNRGTDKIRKTLSPIAPQVVAEAGSFSVPEQKAVAARSVFAVIFSGTYGLGTMLLWLTYFMGLVIVYLLTSWLPTLMRDSGASMEQAAFIGALFQFGGVLSAVGVGWAMDRYNPHKVIGIFYLLAGVFAYAVGQSLGNITVLATLVLIAGMCVNGAQSAMPSLAARFYPTQGRATGVSWMLGIGRFGAILGAWSGATLLGLGWNFEQVLTALLVPAALATVGVIVKGLVSHADAT.

Over 1–30 (MNQAQNSVGKSLDVQSFINQQPLSRYQWRV) the chain is Cytoplasmic. The helical transmembrane segment at 31-51 (VLLCFLIVFLDGLDTAAMGFI) threads the bilayer. Topologically, residues 52–67 (APALSQEWGIDRASLG) are periplasmic. A helical membrane pass occupies residues 68 to 88 (PVMSAALIGMVFGALGSGPLA). Residues 89 to 94 (DRFGRK) lie on the Cytoplasmic side of the membrane. Residues 95-115 (GVLVGAVLVFGGFSLASAYAT) traverse the membrane as a helical segment. At 116–119 (NVDQ) the chain is on the periplasmic side. The helical transmembrane segment at 120-140 (LLVLRFLTGLGLGAGMPNATT) threads the bilayer. Over 141 to 152 (LLSEYTPERLKS) the chain is Cytoplasmic. A helical transmembrane segment spans residues 153 to 173 (LLVTSMFCGFNLGMAGGGFIS). The Periplasmic portion of the chain corresponds to 174–184 (AKMIPAYGWHS). The helical transmembrane segment at 185 to 205 (LLVIGGVLPLLLALVLMVWLP) threads the bilayer. Topologically, residues 206–261 (ESARFLVVRNRGTDKIRKTLSPIAPQVVAEAGSFSVPEQKAVAARSVFAVIFSGTY) are cytoplasmic. Residues 262 to 282 (GLGTMLLWLTYFMGLVIVYLL) form a helical membrane-spanning segment. Residues 283–301 (TSWLPTLMRDSGASMEQAA) are Periplasmic-facing. The chain crosses the membrane as a helical span at residues 302–322 (FIGALFQFGGVLSAVGVGWAM). At 323-329 (DRYNPHK) the chain is on the cytoplasmic side. A helical membrane pass occupies residues 330 to 350 (VIGIFYLLAGVFAYAVGQSLG). Asparagine 351 is a topological domain (periplasmic). The helical transmembrane segment at 352–372 (ITVLATLVLIAGMCVNGAQSA) threads the bilayer. Residues 373–398 (MPSLAARFYPTQGRATGVSWMLGIGR) lie on the Cytoplasmic side of the membrane. A helical transmembrane segment spans residues 399 to 419 (FGAILGAWSGATLLGLGWNFE). Over 420 to 421 (QV) the chain is Periplasmic. The chain crosses the membrane as a helical span at residues 422 to 442 (LTALLVPAALATVGVIVKGLV). The Cytoplasmic portion of the chain corresponds to 443 to 448 (SHADAT).

It belongs to the major facilitator superfamily. Aromatic acid:H(+) symporter (AAHS) (TC 2.A.1.15) family.

The protein resides in the cell inner membrane. Its function is as follows. Transports 4-hydroxybenzoate (4-HBA) and protocatechuate across the membrane. Driven by the proton motive force. Also functions as a chemoreceptor, which is required for chemotaxis to aromatic acids. This Pseudomonas putida (Arthrobacter siderocapsulatus) protein is 4-hydroxybenzoate transporter PcaK (pcaK).